The sequence spans 413 residues: Chloramphenicol efflux pump MT0201 (413 aa).

The next 12 helical transmembrane spans lie at 23 to 43, 55 to 75, 89 to 109, 110 to 130, 150 to 170, 176 to 196, 226 to 246, 256 to 276, 286 to 306, 312 to 332, 353 to 373, and 378 to 398; these read LSVL…PVGA, VVLV…TTVP, LVVS…APNF, AVLA…WAVI, IYIG…AMSL, LAAV…RLAL, VLTM…VVII, NLAW…PLVA, AVIV…ALAF, AATA…ATAV, GLYV…GGLL, and LAMM…GMTV.

This sequence belongs to the major facilitator superfamily.

The protein localises to the cell membrane. Its function is as follows. Active efflux pump that plays an important role in chloramphenicol resistance. This is Chloramphenicol efflux pump MT0201 from Mycobacterium tuberculosis (strain CDC 1551 / Oshkosh).